Here is a 183-residue protein sequence, read N- to C-terminus: Efficient mitochondria targeting-associated protein 19 (183 aa).

Residues 1–25 (MKVVSLRRIYSSEIYKLPTTRLHMD) lie on the Cytoplasmic side of the membrane. Residues 24 to 156 (MDTLYYYYFV…PYLAIPLWMA (133 aa)) enclose the EXPERA domain. Residues 26–46 (TLYYYYFVSHLAAALFVDLPI) form a helical membrane-spanning segment. At 47-81 (TEWLGGSLSCLSGLRRFYLSTYEDPILLIPAPWKT) the chain is on the lumenal side. The chain crosses the membrane as a helical span at residues 82–102 (ALFSSELFFQVPFFIWVSLRL). At 103–110 (RKKARDPV) the chain is on the cytoplasmic side. Residues 111 to 131 (LWVAILIYGVHAFTTTWCCMF) traverse the membrane as a helical segment. Topologically, residues 132–138 (ELFAEKK) are lumenal. The helical transmembrane segment at 139-159 (WMIMSFYFPYLAIPLWMAIDM) threads the bilayer. Topologically, residues 160–183 (GGRLVKSCHAAKSGPSSTITSKSD) are cytoplasmic.

Belongs to the TMEM97/sigma-2 receptor family.

The protein resides in the endoplasmic reticulum membrane. Part of an import route for newly synthesized mitochondrial proteins termed the ER-SURF pathway (ER surface-mediated protein targeting), which retrieves mitochondrial precursor proteins from the ER surface and reroutes them to mitochondria for efficient mitochondrial import. Acts as a quality control factor in the ER, promoting the proteolytic degradation of nonproductive and extramitochondrial precursor proteins in the ER membrane thus removing them from the ER surface. In Schizosaccharomyces pombe (strain 972 / ATCC 24843) (Fission yeast), this protein is Efficient mitochondria targeting-associated protein 19 (ema19).